Here is a 666-residue protein sequence, read N- to C-terminus: ATP synthase subunit alpha 2 (666 aa).

182-189 is a binding site for ATP; that stretch reads GDRATGKT. Residues 527–666 form a disordered region; sequence MPAEDAAGDI…DAEAEARHKR (140 aa). Residues 545 to 590 show a composition bias toward basic and acidic residues; sequence ARGDADRDADHGANREVSREVSPEASREVSREVSCEVSHEADRDAA. The segment covering 591–601 has biased composition (low complexity); sequence ADAARVAGRAP. Basic and acidic residues predominate over residues 623–641; that stretch reads ADGDRASASRPRPDARGDA.

It belongs to the ATPase alpha/beta chains family. As to quaternary structure, F-type ATPases have 2 components, CF(1) - the catalytic core - and CF(0) - the membrane proton channel. CF(1) has five subunits: alpha(3), beta(3), gamma(1), delta(1), epsilon(1). CF(0) has three main subunits: a(1), b(2) and c(9-12). The alpha and beta chains form an alternating ring which encloses part of the gamma chain. CF(1) is attached to CF(0) by a central stalk formed by the gamma and epsilon chains, while a peripheral stalk is formed by the delta and b chains.

The protein resides in the cell inner membrane. The enzyme catalyses ATP + H2O + 4 H(+)(in) = ADP + phosphate + 5 H(+)(out). Produces ATP from ADP in the presence of a proton gradient across the membrane. The alpha chain is a regulatory subunit. In Burkholderia pseudomallei (strain K96243), this protein is ATP synthase subunit alpha 2.